Here is a 407-residue protein sequence, read N- to C-terminus: Phosphopentomutase (407 aa).

Aspartate 10, aspartate 306, histidine 311, aspartate 347, histidine 348, and histidine 359 together coordinate Mn(2+).

Belongs to the phosphopentomutase family. Mn(2+) serves as cofactor.

It is found in the cytoplasm. It catalyses the reaction 2-deoxy-alpha-D-ribose 1-phosphate = 2-deoxy-D-ribose 5-phosphate. The catalysed reaction is alpha-D-ribose 1-phosphate = D-ribose 5-phosphate. It participates in carbohydrate degradation; 2-deoxy-D-ribose 1-phosphate degradation; D-glyceraldehyde 3-phosphate and acetaldehyde from 2-deoxy-alpha-D-ribose 1-phosphate: step 1/2. In terms of biological role, isomerase that catalyzes the conversion of deoxy-ribose 1-phosphate (dRib-1-P) and ribose 1-phosphate (Rib-1-P) to deoxy-ribose 5-phosphate (dRib-5-P) and ribose 5-phosphate (Rib-5-P), respectively. This chain is Phosphopentomutase, found in Shigella boydii serotype 18 (strain CDC 3083-94 / BS512).